The chain runs to 479 residues: RAC-gamma serine/threonine-protein kinase (479 aa).

An N-acetylserine modification is found at Ser2. Residues 5-107 (TIVKEGWVQK…WTEAIQAVAD (103 aa)) form the PH domain. Residues Cys59 and Cys76 are joined by a disulfide bond. A Protein kinase domain is found at 148–405 (FDYLKLLGKG…AKEIMRHSFF (258 aa)). Residues 154-162 (LGKGTFGKV) and Lys177 contribute to the ATP site. Asp271 serves as the catalytic Proton acceptor. A disulfide bridge links Cys293 with Cys307. Thr302 is a glycosylation site (O-linked (GlcNAc) threonine). Position 305 is a phosphothreonine; by PDPK1 (Thr305). A glycan (O-linked (GlcNAc) threonine) is linked at Thr309. The region spanning 406 to 479 (SGVNWQDVYD…QFSYSASGRE (74 aa)) is the AGC-kinase C-terminal domain. Positions 445–479 (TITPPEKYDDDGMDGMDNERRPHFPQFSYSASGRE) are disordered. Position 447 is a phosphothreonine (Thr447). At Ser472 the chain carries Phosphoserine; by PKC/PRKCZ. Ser472 carries an O-linked (GlcNAc) serine; alternate glycan.

This sequence belongs to the protein kinase superfamily. AGC Ser/Thr protein kinase family. RAC subfamily. In terms of assembly, interacts (via PH domain) with TCL1A; this enhances AKT3 phosphorylation and activation. Interacts with TRAF6. Interacts with KCTD20. Interacts with BTBD10. Phosphorylation on Thr-305 and Ser-472 is required for full activity. Phosphorylation of the activation loop at Thr-305 by PDPK1/PDK1 is a prerequisite for full activation. Phosphorylation at Ser-472 by mTORC2 in response to growth factors plays a key role in AKT1 activation by facilitating subsequent phosphorylation of the activation loop by PDPK1/PDK1. Post-translationally, ubiquitinated. When fully phosphorylated and translocated into the nucleus, undergoes 'Lys-48'-polyubiquitination catalyzed by TTC3, leading to its degradation by the proteasome. In terms of processing, O-GlcNAcylation at Thr-302 and Thr-309 inhibits activating phosphorylation at Thr-305 via disrupting the interaction between AKT and PDPK1/PDK1. In terms of tissue distribution, isoform 1 is expressed in prostate, testis, uterus and mammary gland and isoform 2 is expressed in prostate, testis and mammary gland.

It localises to the nucleus. The protein localises to the cytoplasm. It is found in the membrane. The enzyme catalyses L-seryl-[protein] + ATP = O-phospho-L-seryl-[protein] + ADP + H(+). The catalysed reaction is L-threonyl-[protein] + ATP = O-phospho-L-threonyl-[protein] + ADP + H(+). With respect to regulation, two specific sites, one in the kinase domain (Thr-305) and the other in the C-terminal regulatory region (Ser-472), need to be phosphorylated for its full activation. IGF-1 leads to the activation of AKT3, which may play a role in regulating cell survival. Functionally, AKT3 is one of 3 closely related serine/threonine-protein kinases (AKT1, AKT2 and AKT3) called the AKT kinase, and which regulate many processes including metabolism, proliferation, cell survival, growth and angiogenesis. This is mediated through serine and/or threonine phosphorylation of a range of downstream substrates. Over 100 substrate candidates have been reported so far, but for most of them, no isoform specificity has been reported. AKT3 is the least studied AKT isoform. It plays an important role in brain development and is crucial for the viability of malignant glioma cells. AKT3 isoform may also be the key molecule in up-regulation and down-regulation of MMP13 via IL13. Required for the coordination of mitochondrial biogenesis with growth factor-induced increases in cellular energy demands. Down-regulation by RNA interference reduces the expression of the phosphorylated form of BAD, resulting in the induction of caspase-dependent apoptosis. The chain is RAC-gamma serine/threonine-protein kinase (Akt3) from Mus musculus (Mouse).